The chain runs to 1009 residues: 2-oxoglutarate dehydrogenase, mitochondrial (1009 aa).

A mitochondrion-targeting transit peptide spans 1–39 (MLRFIPSSAKARALRRSAVTAYRLNRLTCLSSLQQNRTF). Residues Arg-305, Asp-404, Asn-437, Ile-439, and Gln-669 each coordinate thiamine diphosphate. 3 residues coordinate Mg(2+): Asp-404, Asn-437, and Ile-439.

Belongs to the alpha-ketoglutarate dehydrogenase family. It depends on thiamine diphosphate as a cofactor. Mg(2+) serves as cofactor.

It is found in the mitochondrion matrix. It carries out the reaction N(6)-[(R)-lipoyl]-L-lysyl-[protein] + 2-oxoglutarate + H(+) = N(6)-[(R)-S(8)-succinyldihydrolipoyl]-L-lysyl-[protein] + CO2. Its activity is regulated as follows. Catabolite repressed. The 2-oxoglutarate dehydrogenase complex catalyzes the overall conversion of 2-oxoglutarate to succinyl-CoA and CO(2). It contains multiple copies of three enzymatic components: 2-oxoglutarate dehydrogenase (E1), dihydrolipoamide succinyltransferase (E2) and lipoamide dehydrogenase (E3). In Schizosaccharomyces pombe (strain 972 / ATCC 24843) (Fission yeast), this protein is 2-oxoglutarate dehydrogenase, mitochondrial (kgd1).